A 288-amino-acid polypeptide reads, in one-letter code: Polyamine aminopropyltransferase (288 aa).

Residues Glu-9–Asp-238 enclose the PABS domain. Residue Gln-33 coordinates S-methyl-5'-thioadenosine. The spermidine site is built by His-64 and Asp-88. S-methyl-5'-thioadenosine is bound by residues Glu-108 and Asp-140–Gly-141. The Proton acceptor role is filled by Asp-158. Asp-158 to Asp-161 provides a ligand contact to spermidine. Pro-165 contributes to the S-methyl-5'-thioadenosine binding site.

It belongs to the spermidine/spermine synthase family. Homodimer or homotetramer.

It localises to the cytoplasm. The catalysed reaction is S-adenosyl 3-(methylsulfanyl)propylamine + putrescine = S-methyl-5'-thioadenosine + spermidine + H(+). It functions in the pathway amine and polyamine biosynthesis; spermidine biosynthesis; spermidine from putrescine: step 1/1. Catalyzes the irreversible transfer of a propylamine group from the amino donor S-adenosylmethioninamine (decarboxy-AdoMet) to putrescine (1,4-diaminobutane) to yield spermidine. In Shigella flexneri serotype 5b (strain 8401), this protein is Polyamine aminopropyltransferase.